Reading from the N-terminus, the 274-residue chain is Protein FRG1 homolog (274 aa).

A Nuclear localization signal motif is present at residues 20–36; sequence KKNLFKVGKEKKKKNKD. The interval 27-46 is disordered; the sequence is GKEKKKKNKDDKEKIDPDTV. Residues 34-43 are compositionally biased toward basic and acidic residues; it reads NKDDKEKIDP. The Bipartite nuclear localization signal signature appears at 252–268; sequence QADGSAHELLLDRRMKM.

The protein belongs to the FRG1 family.

The protein resides in the nucleus. It is found in the cajal body. Its subcellular location is the nucleolus. The protein localises to the cytoplasm. Binds to mRNA in a sequence-independent manner. May play a role in regulation of pre-mRNA splicing or in the assembly of rRNA into ribosomal subunits. May be involved in mRNA transport. May be involved in epigenetic regulation of muscle differentiation through regulation of activity of the histone-lysine N-methyltransferase KMT5B. The sequence is that of Protein FRG1 homolog (frg-1) from Caenorhabditis elegans.